The chain runs to 130 residues: Protein ApaG (130 aa).

An ApaG domain is found at 3 to 127 (SEVTRSIRVT…FSLDSPHGRS (125 aa)).

This Rhodospirillum centenum (strain ATCC 51521 / SW) protein is Protein ApaG.